We begin with the raw amino-acid sequence, 84 residues long: Small ribosomal subunit protein bS20 (84 aa).

This sequence belongs to the bacterial ribosomal protein bS20 family.

Binds directly to 16S ribosomal RNA. This is Small ribosomal subunit protein bS20 from Parabacteroides distasonis (strain ATCC 8503 / DSM 20701 / CIP 104284 / JCM 5825 / NCTC 11152).